A 249-amino-acid chain; its full sequence is Putative TrmH family tRNA/rRNA methyltransferase YacO (249 aa).

The S-adenosyl-L-methionine site is built by Gly198, Leu218, and Leu227.

It belongs to the class IV-like SAM-binding methyltransferase superfamily. RNA methyltransferase TrmH family.

This chain is Putative TrmH family tRNA/rRNA methyltransferase YacO (yacO), found in Bacillus subtilis (strain 168).